Consider the following 180-residue polypeptide: Acireductone dioxygenase (180 aa).

Positions 97, 99, 103, and 141 each coordinate Fe(2+). Residues H97, H99, E103, and H141 each contribute to the Ni(2+) site.

This sequence belongs to the acireductone dioxygenase (ARD) family. As to quaternary structure, monomer. Requires Fe(2+) as cofactor. The cofactor is Ni(2+).

The catalysed reaction is 1,2-dihydroxy-5-(methylsulfanyl)pent-1-en-3-one + O2 = 3-(methylsulfanyl)propanoate + CO + formate + 2 H(+). It catalyses the reaction 1,2-dihydroxy-5-(methylsulfanyl)pent-1-en-3-one + O2 = 4-methylsulfanyl-2-oxobutanoate + formate + 2 H(+). The protein operates within amino-acid biosynthesis; L-methionine biosynthesis via salvage pathway; L-methionine from S-methyl-5-thio-alpha-D-ribose 1-phosphate: step 5/6. Functionally, catalyzes 2 different reactions between oxygen and the acireductone 1,2-dihydroxy-3-keto-5-methylthiopentene (DHK-MTPene) depending upon the metal bound in the active site. Fe-containing acireductone dioxygenase (Fe-ARD) produces formate and 2-keto-4-methylthiobutyrate (KMTB), the alpha-ketoacid precursor of methionine in the methionine recycle pathway. Ni-containing acireductone dioxygenase (Ni-ARD) produces methylthiopropionate, carbon monoxide and formate, and does not lie on the methionine recycle pathway. This chain is Acireductone dioxygenase, found in Citrobacter koseri (strain ATCC BAA-895 / CDC 4225-83 / SGSC4696).